The sequence spans 165 residues: UPF0303 protein BceJ2315_15790 (165 aa).

This sequence belongs to the UPF0303 family.

This is UPF0303 protein BceJ2315_15790 from Burkholderia cenocepacia (strain ATCC BAA-245 / DSM 16553 / LMG 16656 / NCTC 13227 / J2315 / CF5610) (Burkholderia cepacia (strain J2315)).